We begin with the raw amino-acid sequence, 865 residues long: DNA topoisomerase 1 (865 aa).

One can recognise a Toprim domain in the interval 3-142; sequence KALVIVESPA…RYSRVVFNEI (140 aa). Residue E9 coordinates Mg(2+). A disordered region spans residues 37–65; it reads LPTSGSAAKKSADSTSTKTAKKPKKDERG. A compositionally biased stretch (low complexity) spans 39 to 54; the sequence is TSGSAAKKSADSTSTK. D111 contributes to the Mg(2+) binding site. In terms of domain architecture, Topo IA-type catalytic spans 158-575; the sequence is NIDRVNAQQA…HFFSDFTQQL (418 aa). The interaction with DNA stretch occupies residues 192–197; the sequence is SAGRVQ. Y319 functions as the O-(5'-phospho-DNA)-tyrosine intermediate in the catalytic mechanism. 3 C4-type zinc fingers span residues 599-630, 662-689, and 711-736; these read CPTCGRKMGIRTASTGVFLGCSGYALPPKERC, CPKCGTAMDSYLIDPKRKLHVCGNNPTC, and CEKCGSEMHLKMGRFGKYMACTNEEC.

This sequence belongs to the type IA topoisomerase family. As to quaternary structure, monomer. Mn(2+) serves as cofactor. Ca(2+) is required as a cofactor.

It catalyses the reaction ATP-independent breakage of single-stranded DNA, followed by passage and rejoining.. Functionally, releases the supercoiling and torsional tension of DNA, which is introduced during the DNA replication and transcription, by transiently cleaving and rejoining one strand of the DNA duplex. Introduces a single-strand break via transesterification at a target site in duplex DNA. The scissile phosphodiester is attacked by the catalytic tyrosine of the enzyme, resulting in the formation of a DNA-(5'-phosphotyrosyl)-enzyme intermediate and the expulsion of a 3'-OH DNA strand. The free DNA strand then undergoes passage around the unbroken strand, thus removing DNA supercoils. Finally, in the religation step, the DNA 3'-OH attacks the covalent intermediate to expel the active-site tyrosine and restore the DNA phosphodiester backbone. This chain is DNA topoisomerase 1, found in Escherichia coli (strain K12).